Here is a 311-residue protein sequence, read N- to C-terminus: Fructose-1,6-bisphosphatase class 1 (311 aa).

Glu90, Asp110, Leu112, and Asp113 together coordinate Mg(2+). Residues Asp113 to Ser116, Tyr221, and Lys251 contribute to the substrate site. A Mg(2+)-binding site is contributed by Glu257.

The protein belongs to the FBPase class 1 family. As to quaternary structure, homotetramer. Mg(2+) is required as a cofactor.

It localises to the cytoplasm. It catalyses the reaction beta-D-fructose 1,6-bisphosphate + H2O = beta-D-fructose 6-phosphate + phosphate. Its pathway is carbohydrate biosynthesis; gluconeogenesis. The sequence is that of Fructose-1,6-bisphosphatase class 1 from Methanospirillum hungatei JF-1 (strain ATCC 27890 / DSM 864 / NBRC 100397 / JF-1).